The primary structure comprises 1251 residues: Phospholipid-transporting ATPase IC (1251 aa).

Positions 1 to 54 (MSTERDSETTFDEDSQPNDEVVPYSDDETEDELDDQGSAVEPEQNRVNREAEEN) are disordered. The Cytoplasmic segment spans residues 1–108 (MSTERDSETT…TYKYNAFTFI (108 aa)). Residues 25 to 35 (SDDETEDELDD) are compositionally biased toward acidic residues. A compositionally biased stretch (basic and acidic residues) spans 43 to 54 (EQNRVNREAEEN). A helical transmembrane segment spans residues 109-130 (PMNLFEQFKRAANLYFLALLIL). Residues 131–136 (QAVPQI) are Exoplasmic loop-facing. A helical membrane pass occupies residues 137–156 (STLAWYTTLVPLLVVLGVTA). At 157–340 (IKDLVDDVAR…TKIDYLMNYM (184 aa)) the chain is on the cytoplasmic side. A helical transmembrane segment spans residues 341–362 (VYTIFVVLILLSAGLAIGHAYW). Residues 363–389 (EAQVGNSSWYLYDGEDDTPSYRGFLIF) are Exoplasmic loop-facing. A helical membrane pass occupies residues 390–411 (WGYIIVLNTMVPISLYVSVEVI). Over 412-949 (RLGQSHFINW…GRWSYIRMCK (538 aa)) the chain is Cytoplasmic. The active-site 4-aspartylphosphate intermediate is the Asp454. ATP-binding residues include Asp454, Lys455, Thr456, Glu555, Phe596, Lys619, Arg652, Thr732, Gly733, Asp734, Arg867, and Lys873. Asp454 contributes to the Mg(2+) binding site. Mg(2+) is bound at residue Thr456. Asp893 contributes to the Mg(2+) binding site. Residues Asn896 and Asp897 each coordinate ATP. Asp897 contacts Mg(2+). Residues 950 to 970 (FLRYFFYKNFAFTLVHFWYSF) form a helical membrane-spanning segment. The Exoplasmic loop segment spans residues 971-982 (FNGYSAQTAYED). The chain crosses the membrane as a helical span at residues 983 to 1002 (WFITLYNVLYTSLPVLLMGL). Over 1003–1032 (LDQDVSDKLSLRFPGLYIVGQRDLLFNYKR) the chain is Cytoplasmic. The chain crosses the membrane as a helical span at residues 1033–1054 (FFVSLLHGVLTSMILFFIPLGA). Residues 1055-1068 (YLQTVGQDGEAPSD) lie on the Exoplasmic loop side of the membrane. Residues 1069–1091 (YQSFAVTIASALVITVNFQIGLD) form a helical membrane-spanning segment. At 1092-1097 (TSYWTF) the chain is on the cytoplasmic side. The helical transmembrane segment at 1098–1118 (VNAFSIFGSIALYFGIMFDFH) threads the bilayer. Residues 1119-1138 (SAGIHVLFPSAFQFTGTASN) lie on the Exoplasmic loop side of the membrane. Residues 1139 to 1163 (ALRQPYIWLTIILAVAVCLLPVVAI) traverse the membrane as a helical segment. Over 1164 to 1251 (RFLSMTIWPS…TAEYRRTGDS (88 aa)) the chain is Cytoplasmic. Ser1223 bears the Phosphoserine mark.

This sequence belongs to the cation transport ATPase (P-type) (TC 3.A.3) family. Type IV subfamily. Component of a P4-ATPase flippase complex which consists of a catalytic alpha subunit ATP8B1 and an accessory beta subunit TMEM30A. The flippase ATP8B1:TMEM30A complex can form an intermediate phosphoenzyme in vitro. Also interacts with beta subunit TMEM30B. It depends on Mg(2+) as a cofactor. As to expression, found in most tissues except brain and skeletal muscle. Most abundant in pancreas and small intestine.

It localises to the cell membrane. Its subcellular location is the apical cell membrane. The protein resides in the cell projection. It is found in the stereocilium. The protein localises to the endoplasmic reticulum. It localises to the golgi apparatus. The enzyme catalyses ATP + H2O + phospholipidSide 1 = ADP + phosphate + phospholipidSide 2.. It catalyses the reaction a 1,2-diacyl-sn-glycero-3-phosphocholine(out) + ATP + H2O = a 1,2-diacyl-sn-glycero-3-phosphocholine(in) + ADP + phosphate + H(+). It carries out the reaction a 1,2-diacyl-sn-glycero-3-phospho-L-serine(out) + ATP + H2O = a 1,2-diacyl-sn-glycero-3-phospho-L-serine(in) + ADP + phosphate + H(+). Its function is as follows. Catalytic component of a P4-ATPase flippase complex which catalyzes the hydrolysis of ATP coupled to the transport of phospholipids, in particular phosphatidylcholines (PC), from the outer to the inner leaflet of the plasma membrane. May participate in the establishment of the canalicular membrane integrity by ensuring asymmetric distribution of phospholipids in the canicular membrane. Thus may have a role in the regulation of bile acids transport into the canaliculus, uptake of bile acids from intestinal contents into intestinal mucosa or both and protect hepatocytes from bile salts. Involved in the microvillus formation in polarized epithelial cells; the function seems to be independent from its flippase activity. Participates in correct apical membrane localization of CDC42, CFTR and SLC10A2. Enables CDC42 clustering at the apical membrane during enterocyte polarization through the interaction between CDC42 polybasic region and negatively charged membrane lipids provided by ATP8B1. Together with TMEM30A is involved in uptake of the synthetic drug alkylphospholipid perifosine. Required for the preservation of cochlear hair cells in the inner ear. May act as cardiolipin transporter during inflammatory injury. This is Phospholipid-transporting ATPase IC from Homo sapiens (Human).